The sequence spans 267 residues: 4-hydroxy-tetrahydrodipicolinate reductase (267 aa).

Residues 10-15 and Glu36 each bind NAD(+); that span reads GCGGRM. Position 37 (Arg37) interacts with NADP(+). NAD(+) is bound by residues 99–101 and 123–126; these read GTT and APNF. Residue His156 is the Proton donor/acceptor of the active site. His157 contributes to the (S)-2,3,4,5-tetrahydrodipicolinate binding site. The Proton donor role is filled by Lys160. 166-167 lines the (S)-2,3,4,5-tetrahydrodipicolinate pocket; the sequence is GT.

Belongs to the DapB family.

The protein localises to the cytoplasm. The enzyme catalyses (S)-2,3,4,5-tetrahydrodipicolinate + NAD(+) + H2O = (2S,4S)-4-hydroxy-2,3,4,5-tetrahydrodipicolinate + NADH + H(+). It catalyses the reaction (S)-2,3,4,5-tetrahydrodipicolinate + NADP(+) + H2O = (2S,4S)-4-hydroxy-2,3,4,5-tetrahydrodipicolinate + NADPH + H(+). It participates in amino-acid biosynthesis; L-lysine biosynthesis via DAP pathway; (S)-tetrahydrodipicolinate from L-aspartate: step 4/4. Catalyzes the conversion of 4-hydroxy-tetrahydrodipicolinate (HTPA) to tetrahydrodipicolinate. The sequence is that of 4-hydroxy-tetrahydrodipicolinate reductase from Laribacter hongkongensis (strain HLHK9).